Here is a 409-residue protein sequence, read N- to C-terminus: Lysosome-associated membrane glycoprotein 1 (409 aa).

Residues 1 to 25 (MAAPGGARRRPLLLLLFAGLVHGAS) form the signal peptide. Residues 26–187 (AVFVVKNGNG…SNFSREETRC (162 aa)) are first lumenal domain. The Lumenal segment spans residues 26-374 (AVFVVKNGNG…EECQLDENSM (349 aa)). Residues N34, N59, N72, N80, N103, N117, N126, N146, N161, and N179 are each glycosylated (N-linked (GlcNAc...) asparagine). An intrachain disulfide couples C38 to C76. C151 and C187 are joined by a disulfide. Residues 180 to 207 (FSREETRCEQDLPTPTTPPQPAPTPAPA) form a disordered region. Residues 188-219 (EQDLPTPTTPPQPAPTPAPASPAVFRYNVSGS) form a hinge region. The span at 194–207 (PTTPPQPAPTPAPA) shows a compositional bias: pro residues. 8 N-linked (GlcNAc...) asparagine glycosylation sites follow: N215, N220, N241, N253, N260, N285, N299, and N314. Residues 220 to 374 (NGTCLLASMG…EECQLDENSM (155 aa)) are second lumenal domain. C223 and C261 form a disulfide bridge. A disulfide bond links C330 and C367. The chain crosses the membrane as a helical span at residues 375-398 (LIPIAVGGALAGLVLIVLLAYLIG). Topologically, residues 399 to 409 (RKRSHAGYQTI) are cytoplasmic.

It belongs to the LAMP family. Interacts with ABCB9; this interaction strongly stabilizes ABCB9 and protects ABCB9 against lysosomal degradation. Interacts with FURIN. Interacts with TMEM175; inhibiting the proton channel activity of TMEM175. O- and N-glycosylated; some of the N-glycans attached to LAMP-1 are polylactosaminoglycans.

It localises to the lysosome membrane. Its subcellular location is the endosome membrane. The protein localises to the late endosome membrane. The protein resides in the cell membrane. It is found in the cytolytic granule membrane. Lysosomal membrane glycoprotein which plays an important role in lysosome biogenesis, lysosomal pH regulation, autophagy and cholesterol homeostasis. Acts as an important regulator of lysosomal lumen pH regulation by acting as a direct inhibitor of the proton channel TMEM175, facilitating lysosomal acidification for optimal hydrolase activity. Also plays an important role in NK-cells cytotoxicity. Mechanistically, participates in cytotoxic granule movement to the cell surface and perforin trafficking to the lytic granule. In addition, protects NK-cells from degranulation-associated damage induced by their own cytotoxic granule content. Presents carbohydrate ligands to selectins. The sequence is that of Lysosome-associated membrane glycoprotein 1 (LAMP1) from Bos taurus (Bovine).